Consider the following 235-residue polypeptide: Replication protein (235 aa).

Tyr149 lines the DNA pocket.

The protein belongs to the Gram-positive plasmids replication protein type 1 family.

Produces a single-strand nick in a specific site of the plasmid, and this nick results in single-strand replication by rolling circle mechanism. The protein is Replication protein (repB) of Bacillus sp.